The primary structure comprises 583 residues: Aspartyl protease APCB1 (583 aa).

The chain crosses the membrane as a helical span at residues 83–103 (LVLGLLGISLLAVAFYASVFP). Residues 203–564 (YYTRILVGKP…DNVKRRIGWM (362 aa)) form the Peptidase A1 domain. Catalysis depends on residues D223 and D431.

It belongs to the peptidase A1 family. As to quaternary structure, interacts with BAG6 and BAGP1.

It is found in the membrane. Involved in proteolytic processing of BAG6 and plant basal immunity. The protein is Aspartyl protease APCB1 of Arabidopsis thaliana (Mouse-ear cress).